A 348-amino-acid polypeptide reads, in one-letter code: MKTAQGVSATLTMEVARVQAIASLSKCMDTIPSEYIRSENEQPAATTLHGVVLQVPVIDLRDPDENKMVKLIADASKEWGIFQLINHGIPDEAIADLQKVGKEFFEHVPQEEKELIAKTPGSNDIEGYGTSLQKEVEGKKGWVDHLFHKIWPPSAVNYRYWPKNPPSYREANEEYGKRMREVVDRIFKSLSLGLGLEGHEMIEAAGGDEIVYLLKINYYPPCPRPDLALGVVAHTDMSYITILVPNEVQGLQVFKDGHWYDVKYIPNALIVHIGDQVEILSNGKYKSVYHRTTVNKDKTRMSWPVFLEPPSEHEVGPIPKLLSEANPPKFKTKKYKDYVYCKLNKLPQ.

One can recognise a Fe2OG dioxygenase domain in the interval 209 to 309 (EIVYLLKINY…RMSWPVFLEP (101 aa)). Fe cation contacts are provided by H234, D236, and H290.

The protein belongs to the iron/ascorbate-dependent oxidoreductase family. L-ascorbate serves as cofactor. It depends on Fe cation as a cofactor.

The protein resides in the cytoplasm. The catalysed reaction is a (2R,3R)-dihydroflavonol + 2-oxoglutarate + O2 = a flavonol + succinate + CO2 + H2O. It catalyses the reaction a (2S)-flavan-4-one + 2-oxoglutarate + O2 = a (2R,3R)-dihydroflavonol + succinate + CO2. It functions in the pathway secondary metabolite biosynthesis; flavonoid biosynthesis. Functionally, catalyzes the formation of flavonols from dihydroflavonols. It can act on dihydrokaempferol to produce kaempferol, on dihydroquercetin to produce quercitin and on dihydromyricetin to produce myricetin. In Petunia hybrida (Petunia), this protein is Flavonol synthase/flavanone 3-hydroxylase (FL).